The sequence spans 228 residues: Lipoprotein-releasing system ATP-binding protein LolD (228 aa).

Residues 6–228 form the ABC transporter domain; it reads LRLSGIEKTY…LSDGRLSAES (223 aa). 43–50 is an ATP binding site; sequence APSGAGKS.

This sequence belongs to the ABC transporter superfamily. Lipoprotein translocase (TC 3.A.1.125) family. The complex is composed of two ATP-binding proteins (LolD) and two transmembrane proteins (LolC and LolE).

The protein localises to the cell inner membrane. In terms of biological role, part of the ABC transporter complex LolCDE involved in the translocation of mature outer membrane-directed lipoproteins, from the inner membrane to the periplasmic chaperone, LolA. Responsible for the formation of the LolA-lipoprotein complex in an ATP-dependent manner. The chain is Lipoprotein-releasing system ATP-binding protein LolD from Ruegeria pomeroyi (strain ATCC 700808 / DSM 15171 / DSS-3) (Silicibacter pomeroyi).